Here is a 282-residue protein sequence, read N- to C-terminus: Protein-export membrane protein SecF (282 aa).

6 helical membrane-spanning segments follow: residues Met-16–Val-36, Gln-126–Phe-146, Ile-148–Ala-168, Phe-169–Ile-189, Gly-221–Leu-241, and Val-253–Leu-273.

Belongs to the SecD/SecF family. SecF subfamily. In terms of assembly, part of the protein translocation apparatus. Forms a complex with SecD.

The protein localises to the cell membrane. Its function is as follows. Involved in protein export. The sequence is that of Protein-export membrane protein SecF from Methanolacinia petrolearia (strain DSM 11571 / OCM 486 / SEBR 4847) (Methanoplanus petrolearius).